Reading from the N-terminus, the 1416-residue chain is Phospholipid-transporting ATPase VD (1416 aa).

The Cytoplasmic portion of the chain corresponds to 1 to 97 (MTELLQWARH…PRNLFEQFHR (97 aa)). A helical transmembrane segment spans residues 98–118 (AANLYFLFLVVLNWVPLVEAF). Topologically, residues 119 to 120 (QK) are exoplasmic loop. The chain crosses the membrane as a helical span at residues 121–141 (EITMLPLVVVLTIIAIKDGLE). Topologically, residues 142–321 (DYRKYKIDKQ…SKLERRANTD (180 aa)) are cytoplasmic. Residues 322-342 (VLWCVLLLIVMCLTGALGHGI) traverse the membrane as a helical segment. Residues 343–365 (WLSRYENMLFFNIPEPDGRVISP) lie on the Exoplasmic loop side of the membrane. The helical transmembrane segment at 366-386 (VLTGFYVFWTMIILLQVLIPI) threads the bilayer. The Cytoplasmic portion of the chain corresponds to 387-1110 (SLYVSIEIVK…HWCYTRLSNM (724 aa)). Asp438 acts as the 4-aspartylphosphate intermediate in catalysis. 3 residues coordinate ATP: Asp438, Lys439, and Thr440. Residue Asp438 coordinates Mg(2+). Thr440 serves as a coordination point for Mg(2+). Residues 498 to 544 (AQGCRTVPSGPLGKPSAQLSGSTSAVGNGEGSGEVPHSRQAAFSSPM) are disordered. The span at 514-523 (AQLSGSTSAV) shows a compositional bias: polar residues. The ATP site is built by Glu729, Phe771, Lys795, Arg838, Thr918, Gly919, and Asp920. The tract at residues 971 to 990 (PELASSRKNFPQPSDAQGQG) is disordered. Residues 976 to 987 (SRKNFPQPSDAQ) are compositionally biased toward polar residues. Residues 993–1000 (GLVITGKT), Arg1027, and Lys1033 contribute to the ATP site. Asp1053 is a Mg(2+) binding site. ATP-binding residues include Asn1056 and Asp1057. Asp1057 serves as a coordination point for Mg(2+). A helical transmembrane segment spans residues 1111-1131 (ILYFFYKNVAYVNLLFWYQFF). Over 1132-1142 (CGFSGTSMTDY) the chain is Exoplasmic loop. Residues 1143-1163 (WVLIFFNLLFTSVPPIIYGVL) form a helical membrane-spanning segment. Topologically, residues 1164 to 1192 (EKDVSAETLLQLPELYRSGQRSEEYLPLT) are cytoplasmic. A helical transmembrane segment spans residues 1193–1213 (FWITLLDAFYQSLVCFFVPYF). The Exoplasmic loop segment spans residues 1214–1221 (TYQGSDID). The chain crosses the membrane as a helical span at residues 1222–1242 (IFTFGNPLNTAALFIILLHLV). Residues 1243-1252 (IESKSLTWIH) are Cytoplasmic-facing. The chain crosses the membrane as a helical span at residues 1253–1273 (MLVTVGSILSYFFFALAFGAL). Topologically, residues 1274–1289 (CVTCNPPSNPYGIMRK) are exoplasmic loop. Residues 1290 to 1310 (HMLDPVFYLVCVLTTFVALLP) traverse the membrane as a helical segment. At 1311–1416 (RFLYRVLQGS…ASKMTGSSAS (106 aa)) the chain is on the cytoplasmic side. Residues 1358–1416 (SKHASQSAAMSGRPTPGSSAVLAMKSATVSTVEQSTRETALDRGCSEPGASKMTGSSAS) form a disordered region. Position 1361-1368 (1361-1368 (ASQSAAMS)) interacts with ATP. Over residues 1392–1402 (STRETALDRGC) the composition is skewed to basic and acidic residues.

Belongs to the cation transport ATPase (P-type) (TC 3.A.3) family. Type IV subfamily. In terms of assembly, component of a P4-ATPase flippase complex which consists of a catalytic alpha subunit ATP10A and an accessory beta subunit TMEM30A. The cofactor is Mg(2+). Post-translationally, autophosphorylated at the conserved aspartate of the P-type ATPase signature sequence. Expressed at low amounts in liver, brain, testes, and kidney (at protein level). Expressed in placenta.

Its subcellular location is the cell membrane. It is found in the endoplasmic reticulum membrane. The catalysed reaction is ATP + H2O + phospholipidSide 1 = ADP + phosphate + phospholipidSide 2.. It catalyses the reaction a beta-D-glucosyl-(1&lt;-&gt;1')-N-acylsphing-4-enine(out) + ATP + H2O = a beta-D-glucosyl-(1&lt;-&gt;1')-N-acylsphing-4-enine(in) + ADP + phosphate + H(+). Its function is as follows. Catalytic component of a P4-ATPase flippase complex, which catalyzes the hydrolysis of ATP coupled to the transport of glucosylceramide (GlcCer) from the outer to the inner leaflet of the plasma membrane. In Mus musculus (Mouse), this protein is Phospholipid-transporting ATPase VD (Atp10d).